Consider the following 334-residue polypeptide: Glyceraldehyde-3-phosphate dehydrogenase 2 (334 aa).

Residues 12 to 13, Asp-35, and Arg-79 each bind NAD(+); that span reads RI. D-glyceraldehyde 3-phosphate is bound by residues 152–154, Thr-183, Arg-198, 211–212, and Arg-234; these read SCT and SG. Cys-153 acts as the Nucleophile in catalysis. Asn-315 is an NAD(+) binding site.

The protein belongs to the glyceraldehyde-3-phosphate dehydrogenase family. As to quaternary structure, homotetramer.

It is found in the cytoplasm. The catalysed reaction is D-glyceraldehyde 3-phosphate + phosphate + NAD(+) = (2R)-3-phospho-glyceroyl phosphate + NADH + H(+). The protein operates within carbohydrate degradation; glycolysis; pyruvate from D-glyceraldehyde 3-phosphate: step 1/5. Its activity is regulated as follows. Inhibited by pentalenolactone (PL). In terms of biological role, catalyzes the oxidative phosphorylation of glyceraldehyde 3-phosphate (G3P) to 1,3-bisphosphoglycerate (BPG) using the cofactor NAD. The first reaction step involves the formation of a hemiacetal intermediate between G3P and a cysteine residue, and this hemiacetal intermediate is then oxidized to a thioester, with concomitant reduction of NAD to NADH. The reduced NADH is then exchanged with the second NAD, and the thioester is attacked by a nucleophilic inorganic phosphate to produce BPG. The chain is Glyceraldehyde-3-phosphate dehydrogenase 2 (gap2) from Streptomyces arenae.